The following is a 264-amino-acid chain: Ribosomal protein L11 methyltransferase (264 aa).

The S-adenosyl-L-methionine site is built by threonine 116, glycine 137, aspartate 159, and asparagine 200.

It belongs to the methyltransferase superfamily. PrmA family.

The protein resides in the cytoplasm. The enzyme catalyses L-lysyl-[protein] + 3 S-adenosyl-L-methionine = N(6),N(6),N(6)-trimethyl-L-lysyl-[protein] + 3 S-adenosyl-L-homocysteine + 3 H(+). Methylates ribosomal protein L11. This Thermotoga petrophila (strain ATCC BAA-488 / DSM 13995 / JCM 10881 / RKU-1) protein is Ribosomal protein L11 methyltransferase.